The chain runs to 218 residues: Claudin-5 (218 aa).

The Cytoplasmic portion of the chain corresponds to 1–7; that stretch reads MGSAALE. A helical transmembrane segment spans residues 8 to 28; the sequence is ILGLVLCLVGWVGLILACGLP. The Extracellular segment spans residues 29 to 81; it reads MWQVTAFLDHNIVTAQTTWKGLWMSCVVQSTGHMQCKVYESVLALSAEVQAAR. A helical membrane pass occupies residues 82–102; it reads ALTVGAVLLALVALFVTLTGA. Residues 103-123 lie on the Cytoplasmic side of the membrane; the sequence is QCTTCVAPGPVKARVALTGGA. Residues 124–144 traverse the membrane as a helical segment; it reads LYAVCGLLALVPLCWFANIVV. At 145 to 160 the chain is on the extracellular side; sequence REFYDPTVPVSQKYEL. The chain crosses the membrane as a helical span at residues 161 to 181; the sequence is GAALYIGWAASALLMCGGGLV. At 182 to 218 the chain is on the cytoplasmic side; that stretch reads CCGAWVCTGRPEFSFPVKYSAPRRPTANGDYDKKNYV. The interactions with TJP1, TJP2 and TJP3 stretch occupies residues 217–218; it reads YV.

The protein belongs to the claudin family. Interacts with MPDZ. Directly interacts with TJP1/ZO-1, TJP2/ZO-2 and TJP3/ZO-3. Widely expressed with highest levels in the lung.

Its subcellular location is the cell junction. The protein resides in the tight junction. It is found in the cell membrane. In terms of biological role, plays a major role in tight junction-specific obliteration of the intercellular space, through calcium-independent cell-adhesion activity. The protein is Claudin-5 (Cldn5) of Mus musculus (Mouse).